Reading from the N-terminus, the 794-residue chain is DNA ligase (794 aa).

Residues 35-39 (DAEYD), 84-85 (SL), and glutamate 126 contribute to the NAD(+) site. The active-site N6-AMP-lysine intermediate is the lysine 128. Residues arginine 149, glutamate 186, lysine 302, and lysine 326 each contribute to the NAD(+) site. Zn(2+)-binding residues include cysteine 420, cysteine 423, cysteine 450, and cysteine 456. The BRCT domain occupies 711-794 (VEGLPLAGQT…KLFDEHGVAR (84 aa)).

This sequence belongs to the NAD-dependent DNA ligase family. LigA subfamily. The cofactor is Mg(2+). Requires Mn(2+) as cofactor.

The catalysed reaction is NAD(+) + (deoxyribonucleotide)n-3'-hydroxyl + 5'-phospho-(deoxyribonucleotide)m = (deoxyribonucleotide)n+m + AMP + beta-nicotinamide D-nucleotide.. In terms of biological role, DNA ligase that catalyzes the formation of phosphodiester linkages between 5'-phosphoryl and 3'-hydroxyl groups in double-stranded DNA using NAD as a coenzyme and as the energy source for the reaction. It is essential for DNA replication and repair of damaged DNA. In Pseudomonas aeruginosa (strain UCBPP-PA14), this protein is DNA ligase.